The sequence spans 108 residues: Large ribosomal subunit protein uL24 (108 aa).

This sequence belongs to the universal ribosomal protein uL24 family. As to quaternary structure, part of the 50S ribosomal subunit.

Functionally, one of two assembly initiator proteins, it binds directly to the 5'-end of the 23S rRNA, where it nucleates assembly of the 50S subunit. Its function is as follows. One of the proteins that surrounds the polypeptide exit tunnel on the outside of the subunit. The polypeptide is Large ribosomal subunit protein uL24 (Mycoplasma mycoides subsp. mycoides SC (strain CCUG 32753 / NCTC 10114 / PG1)).